The chain runs to 456 residues: Endoglucanase A (456 aa).

The first 30 residues, 1–30 (MSRIRRFLATALAAATAGVGAIVTAIASAG), serve as a signal peptide directing secretion. The segment at 31–322 (PAHAYDSPFY…RAYELAMNAA (292 aa)) is catalytic. D113 is an active-site residue. Intrachain disulfides connect C114/C159 and C267/C302. Residue D151 is the Proton donor of the active site. The segment at 255 to 280 (SRNGNGPLGSEWCDPPGRATGTWSTT) is disordered. The active-site Nucleophile is the D300. Positions 321–358 (AAPPTYSPSPTPSTPSPSPSQSDPGSPSPSPSQPPAGR) are disordered. A linker ('hinge') (Pro-Ser box) region spans residues 323 to 355 (PPTYSPSPTPSTPSPSPSQSDPGSPSPSPSQPP). Residues 325 to 338 (TYSPSPTPSTPSPS) show a composition bias toward pro residues. Positions 353-456 (QPPAGRACEA…LSSSITCSAS (104 aa)) constitute a CBM2 domain. C360 and C453 are disulfide-bonded.

It belongs to the glycosyl hydrolase 6 (cellulase B) family.

It carries out the reaction Endohydrolysis of (1-&gt;4)-beta-D-glucosidic linkages in cellulose, lichenin and cereal beta-D-glucans.. The protein is Endoglucanase A (celA) of Thermobispora bispora (Microbispora bispora).